A 473-amino-acid polypeptide reads, in one-letter code: Cucurbitadienol 11-hydroxylase (473 aa).

Residues 4-24 (VVLGLATLFVAYYIHWINKWR) traverse the membrane as a helical segment. Residue cysteine 422 participates in heme binding.

This sequence belongs to the cytochrome P450 family. It depends on heme as a cofactor. As to expression, highly expressed in young fruits 15 days after anthesis (15-DAA). Also observed in roots.

The protein resides in the membrane. The catalysed reaction is cucurbitadienol + 2 reduced [NADPH--hemoprotein reductase] + 2 O2 = 11-oxocucurbitadienol + 2 oxidized [NADPH--hemoprotein reductase] + 3 H2O + 2 H(+). It carries out the reaction cucurbitadienol + reduced [NADPH--hemoprotein reductase] + O2 = 11-hydroxycucurbitadienol + oxidized [NADPH--hemoprotein reductase] + H2O + H(+). It catalyses the reaction 11-hydroxycucurbitadienol + reduced [NADPH--hemoprotein reductase] + O2 = 11-oxocucurbitadienol + oxidized [NADPH--hemoprotein reductase] + 2 H2O + H(+). The enzyme catalyses (24R)-24,25-dihydroxycucurbitadienol + reduced [NADPH--hemoprotein reductase] + O2 = mogrol + oxidized [NADPH--hemoprotein reductase] + H2O + H(+). It functions in the pathway secondary metabolite biosynthesis; terpenoid biosynthesis. In terms of biological role, hydroxylase involved in the biosynthesis of cucurbitacin and mogroside tetracyclic triterpene natural products (e.g. siamenoside I and mogrosides IV, V and VI). Cucurbitacins have cytotoxic properties and exhibit deterrent taste as a defense barrier against herbivores. Mogrosides are nonsugar highly oxygenated compounds used as high-intensity zero-calorie sweeteners; they also possess pharmacological properties such as regulating immunity, lowering blood sugar and lipid levels, protecting the liver, and acting as antioxidants and antitumor agents. Catalyzes the oxidation of cucurbitadienol at the C-11 position to produce 11-oxocucurbitadienol, a possible biosynthetic intermediate from cucurbitadienol to mogrol. Also mediates the conversion of 24,25-dihydroxycucurbitadienol to mogrol. The polypeptide is Cucurbitadienol 11-hydroxylase (Siraitia grosvenorii (Monk's fruit)).